A 71-amino-acid polypeptide reads, in one-letter code: Small ribosomal subunit protein bS21 (71 aa).

This sequence belongs to the bacterial ribosomal protein bS21 family.

The sequence is that of Small ribosomal subunit protein bS21 from Dichelobacter nodosus (strain VCS1703A).